The following is a 95-amino-acid chain: Small ribosomal subunit protein bS16 (95 aa).

Belongs to the bacterial ribosomal protein bS16 family.

The sequence is that of Small ribosomal subunit protein bS16 from Thermosipho melanesiensis (strain DSM 12029 / CIP 104789 / BI429).